Reading from the N-terminus, the 22-residue chain is Rothein 4.1 (22 aa).

Belongs to the frog skin active peptide (FSAP) family. Rothein subfamily. Expressed by the skin dorsal glands.

The protein resides in the secreted. Its function is as follows. Lacks antimicrobial activity. Does not inhibit the formation of NO by neuronal nitric oxide. This chain is Rothein 4.1, found in Litoria rothii (Roth's tree frog).